We begin with the raw amino-acid sequence, 418 residues long: NADH-quinone oxidoreductase subunit D (418 aa).

The protein belongs to the complex I 49 kDa subunit family. In terms of assembly, NDH-1 is composed of 14 different subunits. Subunits NuoB, C, D, E, F, and G constitute the peripheral sector of the complex.

The protein resides in the cell inner membrane. The enzyme catalyses a quinone + NADH + 5 H(+)(in) = a quinol + NAD(+) + 4 H(+)(out). In terms of biological role, NDH-1 shuttles electrons from NADH, via FMN and iron-sulfur (Fe-S) centers, to quinones in the respiratory chain. The immediate electron acceptor for the enzyme in this species is believed to be ubiquinone. Couples the redox reaction to proton translocation (for every two electrons transferred, four hydrogen ions are translocated across the cytoplasmic membrane), and thus conserves the redox energy in a proton gradient. The sequence is that of NADH-quinone oxidoreductase subunit D from Bordetella bronchiseptica (strain ATCC BAA-588 / NCTC 13252 / RB50) (Alcaligenes bronchisepticus).